The primary structure comprises 342 residues: Nucleoid-associated protein Sbal223_1817 (342 aa).

The protein belongs to the YejK family.

It localises to the cytoplasm. Its subcellular location is the nucleoid. The chain is Nucleoid-associated protein Sbal223_1817 from Shewanella baltica (strain OS223).